The primary structure comprises 193 residues: Epididymal-specific lipocalin-12 (193 aa).

An N-terminal signal peptide occupies residues 1–19; the sequence is MGPWWALWLILTLPQILGG. Residues C88 and C193 are joined by a disulfide bond. N143 and N172 each carry an N-linked (GlcNAc...) asparagine glycan.

The protein belongs to the calycin superfamily. Lipocalin family. Monomer.

Its subcellular location is the secreted. Functionally, binds all-trans retinoic acid and may act as a retinoid carrier protein within the epididymis. May play a role in male fertility. The polypeptide is Epididymal-specific lipocalin-12 (Lcn12) (Rattus norvegicus (Rat)).